Reading from the N-terminus, the 391-residue chain is Serpin-ZX (391 aa).

The tract at residues 337 to 361 (GTEAAAASAGVIKLRGLLMEEDEID) is RCL. A glycan (N-linked (GlcNAc...) asparagine) is linked at asparagine 375.

Belongs to the serpin family. In terms of assembly, interacts with RD21A. In terms of tissue distribution, expressed in root tips. Expressed in siliques (at protein level).

Its subcellular location is the secreted. The protein localises to the extracellular space. It localises to the apoplast. It is found in the cytoplasm. Inhibits metacaspase-9 (MC9) cysteine protease. Functions through cleavage of its reactive center loop and covalent binding to MC9. Involved in the control of elicitor-stimulated programmed cell death (PCD). During infection by the necrotrophic fungal pathogen Botrytis cinerea, functions to protect cells by limiting the PCD-promoting protease RD21A activity that is released from the ER body or vacuole to the cytoplasm. Involved in the control of water stress-induced cell death by limiting the pro-death protease RD21A activity that is released from the vacuole to the cytoplasm. In Arabidopsis thaliana (Mouse-ear cress), this protein is Serpin-ZX.